Here is a 1275-residue protein sequence, read N- to C-terminus: Mediator of RNA polymerase II transcription subunit 33B (1275 aa).

Positions 772-791 are enriched in low complexity; it reads GSQSLTPSSGSSSLSTSGGD. The interval 772–792 is disordered; sequence GSQSLTPSSGSSSLSTSGGDD.

It belongs to the Mediator complex subunit 33 family. In terms of assembly, component of the Mediator complex. Ubiquitous.

Its subcellular location is the nucleus. Component of the Mediator complex, a coactivator involved in the regulated transcription of nearly all RNA polymerase II-dependent genes. Mediator functions as a bridge to convey information from gene-specific regulatory proteins to the basal RNA polymerase II transcription machinery. The Mediator complex, having a compact conformation in its free form, is recruited to promoters by direct interactions with regulatory proteins and serves for the assembly of a functional preinitiation complex with RNA polymerase II and the general transcription factors. Involved in the repression of phenylpropanoid biosynthesis. May compete with MED33B for common binding partners or for occupancy in Mediator. This Arabidopsis thaliana (Mouse-ear cress) protein is Mediator of RNA polymerase II transcription subunit 33B (MED33B).